The primary structure comprises 207 residues: ATP synthase subunit a (207 aa).

A run of 6 helical transmembrane segments spans residues 3–23 (QHVI…TIFA), 62–82 (LIAS…IPGL), 88–108 (NLNT…FEGI), 119–139 (FLGP…LSHL), 158–178 (LISV…VMLI), and 180–200 (LIAV…YIAG).

This sequence belongs to the ATPase A chain family. As to quaternary structure, F-type ATPases have 2 components, CF(1) - the catalytic core - and CF(0) - the membrane proton channel. CF(1) has five subunits: alpha(3), beta(3), gamma(1), delta(1), epsilon(1). CF(0) has three main subunits: a(1), b(2) and c(9-12). The alpha and beta chains form an alternating ring which encloses part of the gamma chain. CF(1) is attached to CF(0) by a central stalk formed by the gamma and epsilon chains, while a peripheral stalk is formed by the delta and b chains.

The protein localises to the cell inner membrane. In terms of biological role, key component of the proton channel; it plays a direct role in the translocation of protons across the membrane. This Sulfurihydrogenibium sp. (strain YO3AOP1) protein is ATP synthase subunit a.